A 105-amino-acid chain; its full sequence is DNA-directed RNA polymerase subunit omega (105 aa).

The protein belongs to the RNA polymerase subunit omega family. The RNAP catalytic core consists of 2 alpha, 1 beta, 1 beta' and 1 omega subunit. When a sigma factor is associated with the core the holoenzyme is formed, which can initiate transcription.

The catalysed reaction is RNA(n) + a ribonucleoside 5'-triphosphate = RNA(n+1) + diphosphate. Functionally, promotes RNA polymerase assembly. Latches the N- and C-terminal regions of the beta' subunit thereby facilitating its interaction with the beta and alpha subunits. This Streptococcus equi subsp. zooepidemicus (strain MGCS10565) protein is DNA-directed RNA polymerase subunit omega.